Consider the following 332-residue polypeptide: 2,7-dihydroxy-5-methyl-1-naphthoate 7-O-methyltransferase (332 aa).

Arg11 contacts substrate. Residues Trp133, His153, Asp175–Gly179, Gly177, Asp200, Ser227–Phe228, and Ser242–Ala243 each bind S-adenosyl-L-methionine. His246 (proton acceptor) is an active-site residue. Position 247 (Asp247) interacts with substrate.

This sequence belongs to the class I-like SAM-binding methyltransferase superfamily. Cation-independent O-methyltransferase family.

The enzyme catalyses 2,7-dihydroxy-5-methyl-1-naphthoate + S-adenosyl-L-methionine = 2-hydroxy-7-methoxy-5-methyl-1-naphthoate + S-adenosyl-L-homocysteine + H(+). It functions in the pathway antibiotic biosynthesis. In terms of biological role, S-adenosyl-L-methionine-dependent O-methyltransferase that catalyzes regiospecific methylation at the 7-hydroxy group of 2,7-dihydroxy-5-methyl-1-naphthoate in the biosynthesis of the naphthoate moiety of the neocarzinostatin chromophore. Also recognizes other dihydroxynaphthoate as substrates and catalyzes their regiospecific O-methylation. The carboxylate and its ortho-hydroxy groups of the substrate appear to be crucial for NcsB1 substrate recognition and binding, and O-methylation takes place only at the free hydroxy group of these dihydroxynaphthoic acids. This is 2,7-dihydroxy-5-methyl-1-naphthoate 7-O-methyltransferase from Streptomyces carzinostaticus.